Reading from the N-terminus, the 351-residue chain is Selenide, water dikinase (351 aa).

Cysteine 20 is a catalytic residue. Residues lysine 23 and 51–53 (TKD) each bind ATP. Aspartate 54 contributes to the Mg(2+) binding site. ATP contacts are provided by residues aspartate 71, aspartate 94, and 142 to 144 (GHS). A Mg(2+)-binding site is contributed by aspartate 94. Aspartate 230 is a Mg(2+) binding site.

The protein belongs to the selenophosphate synthase 1 family. Class I subfamily. In terms of assembly, homodimer. It depends on Mg(2+) as a cofactor.

The enzyme catalyses hydrogenselenide + ATP + H2O = selenophosphate + AMP + phosphate + 2 H(+). Its function is as follows. Synthesizes selenophosphate from selenide and ATP. The sequence is that of Selenide, water dikinase from Pasteurella multocida (strain Pm70).